The chain runs to 308 residues: MTEQQISRTQAWLESLRPKTLPLAFAAIIVGTALAWWQGHFDPLVALLALITAGLLQILSNLANDYGDAVKGSDKPDRIGPLRGMQKGVITQQEMKRALIITVVLICLSGLALVAVACHTLADFVGFLILGGLSIIAAITYTVGNRPYGYIGLGDISVLVFFGWLSVMGSWYLQAHTLIPALILPATACGLLATAVLNINNLRDINSDRENGKNTLVVRLGEVNARRYHACLLMGSLVCLALFNLFSLHSLWGWLFLLAAPLLVKQARYVMREMDPVAMRPMLERTVKGALLTNLLFVLGIFLSQWAA.

The Cytoplasmic segment spans residues 1–20; sequence MTEQQISRTQAWLESLRPKT. The helical transmembrane segment at 21–41 threads the bilayer; sequence LPLAFAAIIVGTALAWWQGHF. Position 42 (D42) is a topological domain, periplasmic. The helical transmembrane segment at 43–63 threads the bilayer; sequence PLVALLALITAGLLQILSNLA. Topologically, residues 64–97 are cytoplasmic; sequence NDYGDAVKGSDKPDRIGPLRGMQKGVITQQEMKR. The helical transmembrane segment at 98–118 threads the bilayer; it reads ALIITVVLICLSGLALVAVAC. At 119–123 the chain is on the periplasmic side; that stretch reads HTLAD. The chain crosses the membrane as a helical span at residues 124–144; the sequence is FVGFLILGGLSIIAAITYTVG. The Cytoplasmic segment spans residues 145–148; sequence NRPY. Residues 149–169 form a helical membrane-spanning segment; that stretch reads GYIGLGDISVLVFFGWLSVMG. Topologically, residues 170–176 are periplasmic; the sequence is SWYLQAH. A helical membrane pass occupies residues 177–197; sequence TLIPALILPATACGLLATAVL. The Cytoplasmic segment spans residues 198-227; that stretch reads NINNLRDINSDRENGKNTLVVRLGEVNARR. The helical transmembrane segment at 228 to 247 threads the bilayer; it reads YHACLLMGSLVCLALFNLFS. Topologically, residues 248-250 are periplasmic; that stretch reads LHS. The chain crosses the membrane as a helical span at residues 251 to 270; the sequence is LWGWLFLLAAPLLVKQARYV. Topologically, residues 271 to 286 are cytoplasmic; sequence MREMDPVAMRPMLERT. Residues 287–307 form a helical membrane-spanning segment; the sequence is VKGALLTNLLFVLGIFLSQWA. A topological domain (periplasmic) is located at residue A308.

Belongs to the MenA family. Type 1 subfamily.

The protein localises to the cell inner membrane. It catalyses the reaction an all-trans-polyprenyl diphosphate + 1,4-dihydroxy-2-naphthoate + H(+) = a 2-demethylmenaquinol + CO2 + diphosphate. The protein operates within quinol/quinone metabolism; menaquinone biosynthesis; menaquinol from 1,4-dihydroxy-2-naphthoate: step 1/2. Conversion of 1,4-dihydroxy-2-naphthoate (DHNA) to demethylmenaquinone (DMK). Attaches octaprenylpyrophosphate, a membrane-bound 40-carbon side chain to DHNA. The conversion of DHNA to DMK proceeds in three stages: the removal of the carboxyl group of DHNA as CO(2), the attachment of the isoprenoid side chain, and a quinol-to-quinone oxidation, which is thought to be spontaneous. The sequence is that of 1,4-dihydroxy-2-naphthoate octaprenyltransferase from Escherichia coli (strain K12).